The following is a 147-amino-acid chain: Flagellar assembly factor FliW (147 aa).

This sequence belongs to the FliW family. Interacts with translational regulator CsrA and flagellin(s).

Its subcellular location is the cytoplasm. Functionally, acts as an anti-CsrA protein, binds CsrA and prevents it from repressing translation of its target genes, one of which is flagellin. Binds to flagellin and participates in the assembly of the flagellum. In Oceanobacillus iheyensis (strain DSM 14371 / CIP 107618 / JCM 11309 / KCTC 3954 / HTE831), this protein is Flagellar assembly factor FliW.